A 603-amino-acid chain; its full sequence is Vacuolar protein sorting-associated protein 33A (603 aa).

The protein belongs to the STXBP/unc-18/SEC1 family. In terms of assembly, probable component of the homotypic fusion and vacuole protein sorting (HOPS) complex consisting of the core class C Vps proteins vps-11, vps-16, vps-18, and which further associates with vps-33.1, vps-39 and vps-41. Interacts with spe-39. In terms of tissue distribution, ubiquitously expressed at high levels in somatic tissues including the pharynx, muscles, hypodermis, neurons, coelomocytes and spermatheca. Expressed in the intestine.

The protein resides in the lysosome. It is found in the early endosome. It localises to the late endosome. The protein localises to the apical cell membrane. Its function is as follows. Plays a role in vesicle-mediated protein trafficking to lysosomal compartments including the endocytic membrane transport pathways. Believed to act as a component of the putative HOPS endosomal tethering complex which is proposed to be involved in the rab-5-to-rab-7 endosome conversion probably implicating sand-1, and via binding SNAREs and SNARE complexes to mediate tethering and docking events during SNARE-mediated membrane fusion. The HOPS complex is proposed to be recruited to rab-7 on the late endosomal membrane and to regulate late endocytic, phagocytic and autophagic traffic towards lysosomes. Within the HOPS complex, contributes to the normal development of gut granules in embryonic and adult intestinal cells. Required for endosome/lysosome fusion. Required for early embryonic development. This Caenorhabditis elegans protein is Vacuolar protein sorting-associated protein 33A.